The sequence spans 433 residues: ATP-dependent protease ATPase subunit HslU (433 aa).

Residues valine 18, 60–65, aspartate 246, glutamate 311, and arginine 383 contribute to the ATP site; that span reads GVGKTE.

It belongs to the ClpX chaperone family. HslU subfamily. As to quaternary structure, a double ring-shaped homohexamer of HslV is capped on each side by a ring-shaped HslU homohexamer. The assembly of the HslU/HslV complex is dependent on binding of ATP.

It is found in the cytoplasm. ATPase subunit of a proteasome-like degradation complex; this subunit has chaperone activity. The binding of ATP and its subsequent hydrolysis by HslU are essential for unfolding of protein substrates subsequently hydrolyzed by HslV. HslU recognizes the N-terminal part of its protein substrates and unfolds these before they are guided to HslV for hydrolysis. The polypeptide is ATP-dependent protease ATPase subunit HslU (Rhodopseudomonas palustris (strain ATCC BAA-98 / CGA009)).